We begin with the raw amino-acid sequence, 185 residues long: Neuronal vesicle trafficking-associated protein 1 (185 aa).

Topologically, residues 1-82 (MVKLGNNFAE…ITEGVTERFK (82 aa)) are cytoplasmic. The helical; Signal-anchor for type II membrane protein transmembrane segment at 83–103 (VSVLVLFALAFLTCVVFLVVY) threads the bilayer. The Lumenal portion of the chain corresponds to 104–185 (KVYKYDRACP…QETEAAEKSA (82 aa)). The interval 129–164 (ESYYTEQDSSAREKFYTVINHYNLAKQSITRSVSPW) is required for GRIP1 interaction.

The protein belongs to the NSG family. In terms of assembly, forms a complex with GRIP1, GRIA2 and STX12; controls the intracellular fate of AMPAR and the endosomal sorting of the GRIA2 subunit toward recycling and membrane targeting. Interacts with GRIP1. Interacts with STX12. Interacts with APP; could regulate APP processing. Interacts with FAM171A1. Widely expressed in brain and spinal cord. Expressed in neurons during maturation and synapse formation.

The protein resides in the membrane. It localises to the golgi apparatus. Its subcellular location is the trans-Golgi network membrane. It is found in the endosome membrane. The protein localises to the cell projection. The protein resides in the dendrite. It localises to the early endosome membrane. Its subcellular location is the late endosome membrane. It is found in the lysosome lumen. The protein localises to the recycling endosome membrane. The protein resides in the cytoplasmic vesicle membrane. It localises to the golgi stack membrane. Its subcellular location is the endosome. It is found in the multivesicular body membrane. The protein localises to the endoplasmic reticulum membrane. Plays a role in the recycling mechanism in neurons of multiple receptors, including AMPAR, APP and L1CAM and acts at the level of early endosomes to promote sorting of receptors toward a recycling pathway. Regulates sorting and recycling of GRIA2 through interaction with GRIP1 and then contributes to the regulation of synaptic transmission and plasticity by affecting the recycling and targeting of AMPA receptors to the synapse. Is required for faithful sorting of L1CAM to axons by facilitating trafficking from somatodendritic early endosome or the recycling endosome. In an other hand, induces apoptosis via the activation of CASP3 in response to DNA damage. In Rattus norvegicus (Rat), this protein is Neuronal vesicle trafficking-associated protein 1.